The chain runs to 95 residues: Small ribosomal subunit protein uS17 (95 aa).

This sequence belongs to the universal ribosomal protein uS17 family. Part of the 30S ribosomal subunit.

One of the primary rRNA binding proteins, it binds specifically to the 5'-end of 16S ribosomal RNA. The polypeptide is Small ribosomal subunit protein uS17 (Mesomycoplasma hyopneumoniae (strain 7448) (Mycoplasma hyopneumoniae)).